The primary structure comprises 107 residues: Large ribosomal subunit protein uL24 (107 aa).

This sequence belongs to the universal ribosomal protein uL24 family. Part of the 50S ribosomal subunit.

One of two assembly initiator proteins, it binds directly to the 5'-end of the 23S rRNA, where it nucleates assembly of the 50S subunit. In terms of biological role, one of the proteins that surrounds the polypeptide exit tunnel on the outside of the subunit. The polypeptide is Large ribosomal subunit protein uL24 (Streptomyces griseus subsp. griseus (strain JCM 4626 / CBS 651.72 / NBRC 13350 / KCC S-0626 / ISP 5235)).